We begin with the raw amino-acid sequence, 150 residues long: 1,4-dihydroxy-2-naphthoyl-CoA hydrolase (150 aa).

The active site involves aspartate 19.

The protein belongs to the 4-hydroxybenzoyl-CoA thioesterase family. DHNA-CoA hydrolase subfamily.

It catalyses the reaction 1,4-dihydroxy-2-naphthoyl-CoA + H2O = 1,4-dihydroxy-2-naphthoate + CoA + H(+). Its pathway is cofactor biosynthesis; phylloquinone biosynthesis. The protein operates within quinol/quinone metabolism; 1,4-dihydroxy-2-naphthoate biosynthesis; 1,4-dihydroxy-2-naphthoate from chorismate: step 7/7. In terms of biological role, catalyzes the hydrolysis of 1,4-dihydroxy-2-naphthoyl-CoA (DHNA-CoA) to 1,4-dihydroxy-2-naphthoate (DHNA), a reaction involved in phylloquinone (vitamin K1) biosynthesis. The polypeptide is 1,4-dihydroxy-2-naphthoyl-CoA hydrolase (Prochlorococcus marinus subsp. pastoris (strain CCMP1986 / NIES-2087 / MED4)).